A 396-amino-acid chain; its full sequence is Ornithine aminotransferase (396 aa).

N6-(pyridoxal phosphate)lysine is present on Lys-255.

The protein belongs to the class-III pyridoxal-phosphate-dependent aminotransferase family. OAT subfamily. The cofactor is pyridoxal 5'-phosphate.

Its subcellular location is the cytoplasm. It catalyses the reaction a 2-oxocarboxylate + L-ornithine = L-glutamate 5-semialdehyde + an L-alpha-amino acid. Its pathway is amino-acid biosynthesis; L-proline biosynthesis; L-glutamate 5-semialdehyde from L-ornithine: step 1/1. Its function is as follows. Catalyzes the interconversion of ornithine to glutamate semialdehyde. This is Ornithine aminotransferase from Bacillus cereus (strain 03BB102).